The chain runs to 465 residues: tRNA-2-methylthio-N(6)-dimethylallyladenosine synthase (465 aa).

Residues 5 to 125 enclose the MTTase N-terminal domain; sequence RKLHIKSYGC…LPELLKRAGN (121 aa). [4Fe-4S] cluster contacts are provided by Cys14, Cys50, Cys88, Cys166, Cys170, and Cys173. Residues 152–384 enclose the Radical SAM core domain; the sequence is RARGISAFVT…QELIDSQQSA (233 aa). A TRAM domain is found at 387-449; it reads KAAIGSTVDV…RYSFLGELVT (63 aa).

The protein belongs to the methylthiotransferase family. MiaB subfamily. Monomer. It depends on [4Fe-4S] cluster as a cofactor.

It localises to the cytoplasm. It catalyses the reaction N(6)-dimethylallyladenosine(37) in tRNA + (sulfur carrier)-SH + AH2 + 2 S-adenosyl-L-methionine = 2-methylsulfanyl-N(6)-dimethylallyladenosine(37) in tRNA + (sulfur carrier)-H + 5'-deoxyadenosine + L-methionine + A + S-adenosyl-L-homocysteine + 2 H(+). Functionally, catalyzes the methylthiolation of N6-(dimethylallyl)adenosine (i(6)A), leading to the formation of 2-methylthio-N6-(dimethylallyl)adenosine (ms(2)i(6)A) at position 37 in tRNAs that read codons beginning with uridine. This is tRNA-2-methylthio-N(6)-dimethylallyladenosine synthase from Bradyrhizobium diazoefficiens (strain JCM 10833 / BCRC 13528 / IAM 13628 / NBRC 14792 / USDA 110).